A 275-amino-acid chain; its full sequence is Bis(5'-nucleosyl)-tetraphosphatase, symmetrical (275 aa).

It belongs to the Ap4A hydrolase family.

It catalyses the reaction P(1),P(4)-bis(5'-adenosyl) tetraphosphate + H2O = 2 ADP + 2 H(+). Hydrolyzes diadenosine 5',5'''-P1,P4-tetraphosphate to yield ADP. The sequence is that of Bis(5'-nucleosyl)-tetraphosphatase, symmetrical from Stutzerimonas stutzeri (strain A1501) (Pseudomonas stutzeri).